A 23-amino-acid chain; its full sequence is ENFAGGCTPGYQRTADGRCKATF.

A disulfide bridge connects residues Cys7 and Cys19.

The protein belongs to the GBP/PSP1/paralytic peptide family. Hemolymph.

In terms of biological role, causes rapid, rigid paralysis when injected into Lepidopteran larvae. The physiological role may be to reduce hemolymph loss following injury and promote wound healing. In Spodoptera exigua (Beet armyworm), this protein is Paralytic peptide 1.